A 154-amino-acid polypeptide reads, in one-letter code: Small ribosomal subunit protein uS19 (154 aa).

It belongs to the universal ribosomal protein uS19 family.

This chain is Small ribosomal subunit protein uS19 (RPS15), found in Oryza sativa subsp. japonica (Rice).